The following is a 760-amino-acid chain: uncharacterized protein (760 aa).

The segment covering 578–587 (RNRKQSKLRI) has biased composition (basic residues). The segment at 578–604 (RNRKQSKLRISKQQEIQPQKEESVKKE) is disordered. The segment covering 595–604 (PQKEESVKKE) has biased composition (basic and acidic residues).

The protein resides in the mitochondrion. This is an uncharacterized protein from Dictyostelium citrinum (Slime mold).